The following is a 137-amino-acid chain: Ribosome-binding factor A (137 aa).

The protein belongs to the RbfA family. In terms of assembly, monomer. Binds 30S ribosomal subunits, but not 50S ribosomal subunits or 70S ribosomes.

It localises to the cytoplasm. One of several proteins that assist in the late maturation steps of the functional core of the 30S ribosomal subunit. Associates with free 30S ribosomal subunits (but not with 30S subunits that are part of 70S ribosomes or polysomes). Required for efficient processing of 16S rRNA. May interact with the 5'-terminal helix region of 16S rRNA. In Rhodopseudomonas palustris (strain TIE-1), this protein is Ribosome-binding factor A.